Reading from the N-terminus, the 361-residue chain is Innexin inx1 (361 aa).

Topologically, residues 1–28 (MYKLLGGLKEYLKWQDIVTDNAIFRLHN) are cytoplasmic. A helical membrane pass occupies residues 29–49 (LFTTVLLLTCSLIITATQYVG). Over 50 to 109 (NPIHCIVNGLPVRPINTYCWITSTFTMPDAFLRQVGSEVAHPGVANDFGDEDAKKYYTYY) the chain is Extracellular. The helical transmembrane segment at 110–130 (QWVCFVLFFQAMLCYTPKWIW) threads the bilayer. Over 131–181 (DSIEGGLLRTLIMGLNRGLCQDDEKCMKKKALIEYLLRHIKRHNMYALKYW) the chain is Cytoplasmic. A helical membrane pass occupies residues 182–202 (FCETLCLVNIIGQLYLMNHFF). Residues 203–267 (DGEFFSYGLR…LPLNIVNEKT (65 aa)) lie on the Extracellular side of the membrane. The chain crosses the membrane as a helical span at residues 268–288 (YIFLWFWYIILAALLSVLVVY). Topologically, residues 289–361 (RAVILAVPSV…KIETPSSNNP (73 aa)) are cytoplasmic.

The protein belongs to the pannexin family. As to expression, expressed in embryonic neural precursors including the dorsal median neuroblast, glial cells, neuropilar glial ring, developing myoblasts cells and in a circumferential band of epithelial cells at the trochanter/coxa boundary stripe in the developing limb.

It localises to the cell membrane. The protein localises to the cell junction. It is found in the gap junction. Its function is as follows. Structural components of the gap junctions. This Schistocerca americana (American grasshopper) protein is Innexin inx1 (inx1).